Consider the following 131-residue polypeptide: Single-stranded DNA-binding protein 1 (131 aa).

Residues 1 to 103 (MYNKVIAIGR…VLCQSFQLLE (103 aa)) form the SSB domain.

Homotetramer.

This is Single-stranded DNA-binding protein 1 (ssb1) from Streptococcus pyogenes serotype M6 (strain ATCC BAA-946 / MGAS10394).